The sequence spans 374 residues: Relaxin-3 receptor 2 (374 aa).

The Extracellular portion of the chain corresponds to 1–43 (MPTLNTSASPPTFFWANASGGSVLSADDAPMPVKFLALRLMVA). N-linked (GlcNAc...) asparagine glycans are attached at residues asparagine 5 and asparagine 17. Residues 44-64 (LAYGLVGAIGLLGNLAVLWVL) form a helical membrane-spanning segment. Topologically, residues 65-78 (SNCARRAPGPPSDT) are cytoplasmic. A helical membrane pass occupies residues 79–99 (FVFNLALADLGLALTLPFWAA). Residues 100–116 (ESALDFHWPFGGALCKM) lie on the Extracellular side of the membrane. The cysteines at positions 114 and 191 are disulfide-linked. Residues 117–137 (VLTATVLNVYASIFLITALSV) traverse the membrane as a helical segment. The Cytoplasmic segment spans residues 138-154 (ARYWVVAMAAGPGTHLS). A helical membrane pass occupies residues 155 to 175 (LFWARIATLAVWAAAALVTVP). Residues 176–209 (TAVFGVEGEVCGVRLCLLRFPSRYWLGAYQLQRV) are Extracellular-facing. Residues 210-230 (VLAFMVPLGVITTSYLLLLAF) form a helical membrane-spanning segment. The Cytoplasmic portion of the chain corresponds to 231–249 (LQRRQRRRQDSRVVARSVR). A helical membrane pass occupies residues 250 to 270 (ILVASFFLCWFPNHVVTLWGV). Residues 271-281 (LVKFDLVPWNS) are Extracellular-facing. A helical membrane pass occupies residues 282–302 (TFYTIQTYVFPVTTCLAHSNS). The Cytoplasmic segment spans residues 303 to 374 (CLNPVLYCLL…LTNLDRGTPG (72 aa)).

Belongs to the G-protein coupled receptor 1 family. As to expression, expressed in a broader range of tissues including brain, kidney, testis, thymus, placenta, prostate, salivary gland, thyroid and colon.

It localises to the cell membrane. Its function is as follows. High affinity receptor for INSL5. Also acts as a receptor for RLN3/relaxin-3, as well as bradykinin and kallidin. Binding of the ligand inhibit cAMP accumulation. This is Relaxin-3 receptor 2 (RXFP4) from Homo sapiens (Human).